A 395-amino-acid chain; its full sequence is Pyridinium-3,5-bisthiocarboxylic acid mononucleotide nickel insertion protein (395 aa).

This sequence belongs to the LarC family.

It catalyses the reaction Ni(II)-pyridinium-3,5-bisthiocarboxylate mononucleotide = pyridinium-3,5-bisthiocarboxylate mononucleotide + Ni(2+). Involved in the biosynthesis of a nickel-pincer cofactor ((SCS)Ni(II) pincer complex). Binds Ni(2+), and functions in nickel delivery to pyridinium-3,5-bisthiocarboxylic acid mononucleotide (P2TMN), to form the mature cofactor. Is thus probably required for the activation of nickel-pincer cofactor-dependent enzymes. This chain is Pyridinium-3,5-bisthiocarboxylic acid mononucleotide nickel insertion protein, found in Staphylococcus epidermidis (strain ATCC 12228 / FDA PCI 1200).